Here is a 333-residue protein sequence, read N- to C-terminus: Tetraacyldisaccharide 4'-kinase (333 aa).

An ATP-binding site is contributed by T60 to T67.

This sequence belongs to the LpxK family.

The enzyme catalyses a lipid A disaccharide + ATP = a lipid IVA + ADP + H(+). Its pathway is glycolipid biosynthesis; lipid IV(A) biosynthesis; lipid IV(A) from (3R)-3-hydroxytetradecanoyl-[acyl-carrier-protein] and UDP-N-acetyl-alpha-D-glucosamine: step 6/6. In terms of biological role, transfers the gamma-phosphate of ATP to the 4'-position of a tetraacyldisaccharide 1-phosphate intermediate (termed DS-1-P) to form tetraacyldisaccharide 1,4'-bis-phosphate (lipid IVA). The chain is Tetraacyldisaccharide 4'-kinase from Ectopseudomonas mendocina (strain ymp) (Pseudomonas mendocina).